We begin with the raw amino-acid sequence, 248 residues long: MIDENKQVNHTSQQLGESTEVKQAIMSESPAQINNNESTNEVTESVAIPTNVVGDTTATEDNGFTATQIQEANTAALAELTQQINSLKTQLDERSTQYMRIAADFENYRKRTQKEKEELDLQVKRNTILELLPIVDNFERARSHLKPQTESEMTIHKSYQGVYKQLVDSLKRLGVSPMRPEGQEFDPNLHEAVMREPTDEHPEGTVLEELVRGYYLGDRVLRHSMVKVAAPKEDTLPAQENQSSPADS.

The segment at Ala-229–Ser-248 is disordered. Residues Ala-238–Ser-248 show a composition bias toward polar residues.

This sequence belongs to the GrpE family. Homodimer.

It localises to the cytoplasm. Functionally, participates actively in the response to hyperosmotic and heat shock by preventing the aggregation of stress-denatured proteins, in association with DnaK and GrpE. It is the nucleotide exchange factor for DnaK and may function as a thermosensor. Unfolded proteins bind initially to DnaJ; upon interaction with the DnaJ-bound protein, DnaK hydrolyzes its bound ATP, resulting in the formation of a stable complex. GrpE releases ADP from DnaK; ATP binding to DnaK triggers the release of the substrate protein, thus completing the reaction cycle. Several rounds of ATP-dependent interactions between DnaJ, DnaK and GrpE are required for fully efficient folding. The sequence is that of Protein GrpE from Trichormus variabilis (strain ATCC 29413 / PCC 7937) (Anabaena variabilis).